The primary structure comprises 886 residues: Alanine--tRNA ligase (886 aa).

Residues His-564, His-568, Cys-666, and His-670 each contribute to the Zn(2+) site.

It belongs to the class-II aminoacyl-tRNA synthetase family. Zn(2+) is required as a cofactor.

It is found in the cytoplasm. The catalysed reaction is tRNA(Ala) + L-alanine + ATP = L-alanyl-tRNA(Ala) + AMP + diphosphate. In terms of biological role, catalyzes the attachment of alanine to tRNA(Ala) in a two-step reaction: alanine is first activated by ATP to form Ala-AMP and then transferred to the acceptor end of tRNA(Ala). Also edits incorrectly charged Ser-tRNA(Ala) and Gly-tRNA(Ala) via its editing domain. The sequence is that of Alanine--tRNA ligase from Prochlorococcus marinus (strain MIT 9515).